Reading from the N-terminus, the 409-residue chain is NADH-quinone oxidoreductase subunit D (409 aa).

Belongs to the complex I 49 kDa subunit family. As to quaternary structure, NDH-1 is composed of 14 different subunits. Subunits NuoB, C, D, E, F, and G constitute the peripheral sector of the complex.

It is found in the cell inner membrane. It carries out the reaction a quinone + NADH + 5 H(+)(in) = a quinol + NAD(+) + 4 H(+)(out). In terms of biological role, NDH-1 shuttles electrons from NADH, via FMN and iron-sulfur (Fe-S) centers, to quinones in the respiratory chain. The immediate electron acceptor for the enzyme in this species is believed to be ubiquinone. Couples the redox reaction to proton translocation (for every two electrons transferred, four hydrogen ions are translocated across the cytoplasmic membrane), and thus conserves the redox energy in a proton gradient. This chain is NADH-quinone oxidoreductase subunit D, found in Helicobacter acinonychis (strain Sheeba).